A 163-amino-acid polypeptide reads, in one-letter code: K88 minor fimbrial subunit FaeF (163 aa).

A signal peptide spans 1–22 (MKKTMMAAALVLSALSIQSALA).

It is found in the fimbrium. K88 minor fimbrial subunit, plays an essential role in the biogenesis of the K88 fimbriae. required at some step in the initiation and/or elongation of the K88 fimbriae. The protein is K88 minor fimbrial subunit FaeF (faeF) of Escherichia coli.